We begin with the raw amino-acid sequence, 219 residues long: Small ribosomal subunit protein uS3c (219 aa).

Positions 39–109 (IRQYIEKNLS…QIRINVIEVK (71 aa)) constitute a KH type-2 domain.

This sequence belongs to the universal ribosomal protein uS3 family. As to quaternary structure, part of the 30S ribosomal subunit.

The protein localises to the plastid. It localises to the cyanelle. The protein is Small ribosomal subunit protein uS3c (rps3) of Cyanophora paradoxa.